The following is a 371-amino-acid chain: D-erythrose-4-phosphate dehydrogenase (371 aa).

12 to 13 (RI) provides a ligand contact to NAD(+). Residues 154-156 (SCT), Arg200, 213-214 (TK), and Arg236 contribute to the substrate site. Cys155 functions as the Nucleophile in the catalytic mechanism. Asn318 is an NAD(+) binding site.

The protein belongs to the glyceraldehyde-3-phosphate dehydrogenase family. Epd subfamily. In terms of assembly, homotetramer.

It localises to the cytoplasm. It carries out the reaction D-erythrose 4-phosphate + NAD(+) + H2O = 4-phospho-D-erythronate + NADH + 2 H(+). The protein operates within cofactor biosynthesis; pyridoxine 5'-phosphate biosynthesis; pyridoxine 5'-phosphate from D-erythrose 4-phosphate: step 1/5. In terms of biological role, catalyzes the NAD-dependent conversion of D-erythrose 4-phosphate to 4-phosphoerythronate. This Psychromonas ingrahamii (strain DSM 17664 / CCUG 51855 / 37) protein is D-erythrose-4-phosphate dehydrogenase.